The sequence spans 239 residues: MAKPCGVRLSGEARKQVEVFRQNLFQEAEEFLYRFLPQKIIYLNQLLQEDSLNVADLTSLRAPLDIPIPDPPPKDDEMETDKQEKKEVHKCGFLPGNEKVLSLLALVKPEVWTLKEKCILVITWIQHLIPKIEDGNDFGVAIQEKVLERVNAVKTKVEAFQTTISKYFSERGDAVAKASKETHVMDYRALVHERDEAAYGELRAMVLDLRAFYAELYHIISSNLEKIVNPKGEEKPSMY.

Alanine 2 is modified (N-acetylalanine). Serine 10 is subject to Phosphoserine.

It belongs to the PA28 family. In terms of assembly, heterodimer of PSME1 and PSME2, which forms a hexameric ring.

Implicated in immunoproteasome assembly and required for efficient antigen processing. The PA28 activator complex enhances the generation of class I binding peptides by altering the cleavage pattern of the proteasome. In Homo sapiens (Human), this protein is Proteasome activator complex subunit 2 (PSME2).